Here is a 141-residue protein sequence, read N- to C-terminus: uncharacterized protein (141 aa).

Helical transmembrane passes span 41 to 61 and 95 to 115; these read LIML…NYLF and IIFL…SGFF.

It localises to the cell membrane. This is an uncharacterized protein from Rickettsia prowazekii (strain Madrid E).